A 264-amino-acid polypeptide reads, in one-letter code: ATP synthase subunit a (264 aa).

5 helical membrane-spanning segments follow: residues 39-59, 97-117, 139-159, 205-225, and 239-259; these read LDTL…FYII, VAPL…MDLV, TADP…VVFY, LFGN…LPWW, and LLVI…YISL.

The protein belongs to the ATPase A chain family. In terms of assembly, F-type ATPases have 2 components, CF(1) - the catalytic core - and CF(0) - the membrane proton channel. CF(1) has five subunits: alpha(3), beta(3), gamma(1), delta(1), epsilon(1). CF(0) has three main subunits: a(1), b(2) and c(9-12). The alpha and beta chains form an alternating ring which encloses part of the gamma chain. CF(1) is attached to CF(0) by a central stalk formed by the gamma and epsilon chains, while a peripheral stalk is formed by the delta and b chains.

Its subcellular location is the cell inner membrane. Key component of the proton channel; it plays a direct role in the translocation of protons across the membrane. In Coxiella burnetii (strain CbuG_Q212) (Coxiella burnetii (strain Q212)), this protein is ATP synthase subunit a.